The following is a 687-amino-acid chain: Leucine-rich repeat and fibronectin type III domain-containing protein 1-like protein (687 aa).

The N-terminal stretch at 1-17 (MEWLIFSLLLLAVSASG) is a signal peptide. The 34-residue stretch at 18–51 (QLCPKRCMCQNLSPSLAILCAKTGLLFVPTVIDR) folds into the LRRNT domain. The Extracellular segment spans residues 18 to 527 (QLCPKRCMCQ…LRSHFLGGTM (510 aa)). 7 LRR repeats span residues 52–73 (RTVE…DFAN), 76–97 (SLLH…TFAD), 100–121 (RLRA…HFRG), 124–145 (NLRH…AFDD), 149–170 (TLED…TIGR), 173–194 (NVNT…IFSN), and 197–218 (KLAR…PLFL). An N-linked (GlcNAc...) asparagine glycan is attached at N73. Residues 241–287 (NPLHCNCELLWLRRLTREDDLETCASPPDLTAKYFWTIPEEEFICDP) enclose the LRRCT domain. Residues 287 to 376 (PPVITRKSPK…STGTVELVVS (90 aa)) enclose the Ig-like domain. Cysteines 309 and 358 form a disulfide. 6 N-linked (GlcNAc...) asparagine glycosylation sites follow: N331, N340, N346, N383, N410, and N450. The disordered stretch occupies residues 384 to 412 (STNRIREPDPGPSDILTSAKSTSSVSNET). The span at 398 to 412 (ILTSAKSTSSVSNET) shows a compositional bias: polar residues. The Fibronectin type-III domain maps to 415–510 (QERKVVLAEL…VGCVTFVTET (96 aa)). The helical transmembrane segment at 528 to 548 (IIIIGGIIVASVLVFIIILMI) threads the bilayer. Topologically, residues 549–687 (RYKVYSQHGA…AQRDWSDFKI (139 aa)) are cytoplasmic. Disordered stretches follow at residues 563–601 (GTAM…GSLG) and 630–687 (EDIV…DFKI). Polar residues-rich tracts occupy residues 565–576 (AMTNVRSQTNGG) and 657–672 (EGTS…SPQV). The segment covering 673-687 (SDEKKAQRDWSDFKI) has biased composition (basic and acidic residues).

Belongs to the LRFN family.

It is found in the membrane. Its subcellular location is the synapse. Functionally, may be involved in the regulation of excitatory synapses. The chain is Leucine-rich repeat and fibronectin type III domain-containing protein 1-like protein (lrfn1l) from Danio rerio (Zebrafish).